Here is a 569-residue protein sequence, read N- to C-terminus: 63 kDa chaperonin, mitochondrial (569 aa).

A mitochondrion-targeting transit peptide spans 1 to 29; that stretch reads MFKMYRSPHITRNSFKYLKATNINSCRFY.

This sequence belongs to the chaperonin (HSP60) family. Forms a single seven-member ring complex, in tight association with the p60 protein. As to expression, testis.

It is found in the mitochondrion. Functionally, implicated in mitochondrial protein import and macromolecular assembly. May facilitate the correct folding of imported proteins. May also prevent misfolding and promote the refolding and proper assembly of unfolded polypeptides generated under stress conditions in the mitochondrial matrix. This Heliothis virescens (Tobacco budworm moth) protein is 63 kDa chaperonin, mitochondrial.